Consider the following 507-residue polypeptide: RNA-binding protein Nova-1 (507 aa).

Residues 1-44 (MMAAAPIQQNGTHTGVPIDLDPPDSRKRPLEAPPEAGSTKRTNT) are disordered. A Bipartite nuclear localization signal motif is present at residues 27 to 43 (KRPLEAPPEAGSTKRTN). Residues 49-116 (QYFLKVLIPS…EALNAVHGFI (68 aa)) enclose the KH 1 domain. The disordered stretch occupies residues 139–171 (QTTVNPDRIKQTLPSSPTTTKSSPSDPMTTSRA). Residues 150–169 (TLPSSPTTTKSSPSDPMTTS) are compositionally biased toward low complexity. Serine 154 carries the post-translational modification Phosphoserine. KH domains lie at 171–237 (ANQV…VELI) and 421–488 (KDVV…QYLI). The interval 419–503 (GSKDVVEIAV…YEQGVRAANP (85 aa)) is required for RNA binding.

As to quaternary structure, interacts with PTBP2; the interaction is direct. In terms of tissue distribution, expressed in cerebellum, brain stem, hippocampus, and frontal cortex.

The protein localises to the nucleus. Its function is as follows. Functions to regulate alternative splicing in neurons by binding pre-mRNA in a sequence-specific manner to activate exon inclusion or exclusion. It binds specifically to the sequences 5'-YCAY-3' and regulates splicing in only a subset of regulated exons. Binding to an exonic 5'-YCAY-3' cluster changes the protein complexes assembled on pre-mRNA, blocking U1 snRNP binding and exon inclusion, whereas binding to an intronic 5'-YCAY-3' cluster enhances spliceosome assembly and exon inclusion. Binding to 5'-YCAY-3' clusters results in a local and asymmetric action to regulate spliceosome assembly and alternative splicing in neurons. Binding to an exonic 5'-YCAY-3' cluster changed the protein complexes assembled on pre-mRNA, blocking U1 snRNP (small nuclear ribonucleoprotein) binding and exon inclusion, whereas binding to an intronic 5'-YCAY-3' cluster enhanced spliceosome assembly and exon inclusion. With NOVA1, they perform unique biological functions in different brain areas and cell types. Autoregulates its own expression by acting as a splicing repressor. Acts to activate the inclusion of exon E3A in the glycine receptor alpha-2 chain and of exon E9 in gamma-aminobutyric-acid receptor gamma-2 subunit via a distal downstream UCAU-rich intronic splicing enhancer. Acts to regulate a novel glycine receptor alpha-2 chain splice variant (alpha-2N) in developing spinal cord. The polypeptide is RNA-binding protein Nova-1 (Homo sapiens (Human)).